The following is a 593-amino-acid chain: Proteasome-associated ATPase (593 aa).

Positions 5–94 (DDADSRAARW…KEEIDRLAQP (90 aa)) form a coiled coil. 281-286 (GCGKTL) contacts ATP. The interval 574 to 593 (GKGADAGRSIETASNTGQYL) is disordered. Over residues 584–593 (ETASNTGQYL) the composition is skewed to polar residues. The segment at 592–593 (YL) is docks into pockets in the proteasome alpha-ring.

It belongs to the AAA ATPase family. In terms of assembly, homohexamer. Assembles into a hexameric ring structure that caps the 20S proteasome core. Strongly interacts with the prokaryotic ubiquitin-like protein Pup through a hydrophobic interface; the interacting region of ARC lies in its N-terminal coiled-coil domain. There is one Pup binding site per ARC hexamer ring. Upon ATP-binding, the C-terminus of ARC interacts with the alpha-rings of the proteasome core, possibly by binding to the intersubunit pockets.

It participates in protein degradation; proteasomal Pup-dependent pathway. Functionally, ATPase which is responsible for recognizing, binding, unfolding and translocation of pupylated proteins into the bacterial 20S proteasome core particle. May be essential for opening the gate of the 20S proteasome via an interaction with its C-terminus, thereby allowing substrate entry and access to the site of proteolysis. Thus, the C-termini of the proteasomal ATPase may function like a 'key in a lock' to induce gate opening and therefore regulate proteolysis. The chain is Proteasome-associated ATPase from Salinispora arenicola (strain CNS-205).